Consider the following 152-residue polypeptide: Ubiquitin-conjugating enzyme E2 N (152 aa).

Residues 3–149 (GLPRRIIKET…ARAWTRLYAM (147 aa)) enclose the UBC core domain. N6-acetyllysine is present on lysine 82. The Glycyl thioester intermediate role is filled by cysteine 87. A Glycyl lysine isopeptide (Lys-Gly) (interchain with G-Cter in ISG15) cross-link involves residue lysine 92.

Belongs to the ubiquitin-conjugating enzyme family. As to quaternary structure, heterodimer with UBE2V2. Interacts (UBE2V2-UBE2N heterodimer) with the E3 ligase STUB1 (via the U-box domain); the complex has a specific 'Lys-63'-linked polyubiquitination activity. Interacts with RNF8 and RNF168. Interacts with RNF11. Interacts with the E3 ligases, HLTF and SHPRH; the interactions promote the 'Lys-63'-linked polyubiquitination of PCNA upon genotoxic stress and lead to DNA repair. Interacts with ARIH2 (via RING-type 2). Interacts with OTUB1; leading to inhibit E2-conjugating activity. Interacts with GPS2; leading to inhibit E2-conjugating activity. Interacts with RIGI and RNF135; involved in RIGI ubiquitination and activation. Post-translationally, conjugation to ISG15 impairs formation of the thioester bond with ubiquitin but not interaction with UBE2V2.

It catalyses the reaction S-ubiquitinyl-[E1 ubiquitin-activating enzyme]-L-cysteine + [E2 ubiquitin-conjugating enzyme]-L-cysteine = [E1 ubiquitin-activating enzyme]-L-cysteine + S-ubiquitinyl-[E2 ubiquitin-conjugating enzyme]-L-cysteine.. The protein operates within protein modification; protein ubiquitination. Activity is inhibited by binding to OTUB1, which prevents 'Lys-63'-linked polyubiquitination. Activity is inhibited by GPS2, leading to prevent 'Lys-63'-linked polyubiquitination. The UBE2V1-UBE2N and UBE2V2-UBE2N heterodimers catalyze the synthesis of non-canonical 'Lys-63'-linked polyubiquitin chains. This type of polyubiquitination does not lead to protein degradation by the proteasome. Mediates transcriptional activation of target genes. Plays a role in the control of progress through the cell cycle and differentiation. Plays a role in the error-free DNA repair pathway and contributes to the survival of cells after DNA damage. Acts together with the E3 ligases, HLTF and SHPRH, in the 'Lys-63'-linked poly-ubiquitination of PCNA upon genotoxic stress, which is required for DNA repair. Appears to act together with E3 ligase RNF5 in the 'Lys-63'-linked polyubiquitination of JKAMP thereby regulating JKAMP function by decreasing its association with components of the proteasome and ERAD. Promotes TRIM5 capsid-specific restriction activity and the UBE2V1-UBE2N heterodimer acts in concert with TRIM5 to generate 'Lys-63'-linked polyubiquitin chains which activate the MAP3K7/TAK1 complex which in turn results in the induction and expression of NF-kappa-B and MAPK-responsive inflammatory genes. Together with RNF135 and UB2V1, catalyzes the viral RNA-dependent 'Lys-63'-linked polyubiquitination of RIGI to activate the downstream signaling pathway that leads to interferon beta production. UBE2V1-UBE2N together with TRAF3IP2 E3 ubiquitin ligase mediate 'Lys-63'-linked polyubiquitination of TRAF6, a component of IL17A-mediated signaling pathway. In Bos taurus (Bovine), this protein is Ubiquitin-conjugating enzyme E2 N (UBE2N).